Reading from the N-terminus, the 216-residue chain is tRNA (guanine-N(7)-)-methyltransferase (216 aa).

Residues Glu43, Asp68, Asn95, and Asn117 each contribute to the S-adenosyl-L-methionine site. Substrate is bound by residues Asp153 and 190–193; that span reads TEYE.

Belongs to the class I-like SAM-binding methyltransferase superfamily. TrmB family.

It catalyses the reaction guanosine(46) in tRNA + S-adenosyl-L-methionine = N(7)-methylguanosine(46) in tRNA + S-adenosyl-L-homocysteine. The protein operates within tRNA modification; N(7)-methylguanine-tRNA biosynthesis. Functionally, catalyzes the formation of N(7)-methylguanine at position 46 (m7G46) in tRNA. The sequence is that of tRNA (guanine-N(7)-)-methyltransferase from Desulfitobacterium hafniense (strain Y51).